The chain runs to 126 residues: Holo-[acyl-carrier-protein] synthase (126 aa).

The Mg(2+) site is built by Asp9 and Glu58.

The protein belongs to the P-Pant transferase superfamily. AcpS family. It depends on Mg(2+) as a cofactor.

It localises to the cytoplasm. It carries out the reaction apo-[ACP] + CoA = holo-[ACP] + adenosine 3',5'-bisphosphate + H(+). In terms of biological role, transfers the 4'-phosphopantetheine moiety from coenzyme A to a Ser of acyl-carrier-protein. The chain is Holo-[acyl-carrier-protein] synthase from Escherichia coli O139:H28 (strain E24377A / ETEC).